We begin with the raw amino-acid sequence, 445 residues long: Nuclear hormone receptor family member nhr-1 (445 aa).

The disordered stretch occupies residues 19–55 (PMVNSQRNEDPSMYMNGSAASVSHTNGSSSMGNDQKF). Residues 36-51 (SAASVSHTNGSSSMGN) show a composition bias toward polar residues. Residues 70–145 (GELCAVCSDL…VGMDAKALQI (76 aa)) constitute a DNA-binding region (nuclear receptor). 2 NR C4-type zinc fingers span residues 73–93 (CAVC…CNGC) and 109–133 (CQYN…FNKC). Positions 179–444 (QDQEIIDQLT…PFVKELCMKR (266 aa)) constitute an NR LBD domain.

The protein belongs to the nuclear hormone receptor family.

The protein resides in the nucleus. Functionally, orphan nuclear receptor which acts in concert with the insulin/IGF-1-like signaling (IIS) pathway during osmotic stress, perhaps in response to a ligand modified by the sulfotransferase ssu-1. This chain is Nuclear hormone receptor family member nhr-1 (nhr-1), found in Caenorhabditis elegans.